A 331-amino-acid chain; its full sequence is Isopenicillin N synthase (331 aa).

Positions 87, 91, 183, and 189 each coordinate isopenicillin N. 6 residues coordinate N-[(5S)-5-amino-5-carboxypentanoyl]-L-cysteinyl-D-valine: Arg87, Tyr91, Ser183, Tyr189, His214, and Asp216. The region spanning 176–288 (KPDDTLASVV…RQSLPFFVNL (113 aa)) is the Fe2OG dioxygenase domain. The Fe(2+) site is built by His214, Asp216, and His270. Position 279 (Arg279) interacts with 2-oxoglutarate. Ser281 is an isopenicillin N binding site. Ser281 provides a ligand contact to N-[(5S)-5-amino-5-carboxypentanoyl]-L-cysteinyl-D-valine.

This sequence belongs to the iron/ascorbate-dependent oxidoreductase family. Monomer. Fe(2+) is required as a cofactor.

It is found in the cytoplasm. The protein resides in the cytosol. The catalysed reaction is N-[(5S)-5-amino-5-carboxypentanoyl]-L-cysteinyl-D-valine + O2 = isopenicillin N + 2 H2O. Its pathway is antibiotic biosynthesis; penicillin G biosynthesis; penicillin G from L-alpha-aminoadipate and L-cysteine and L-valine: step 2/3. Isopenicillin N synthase; part of the gene cluster that mediates the biosynthesis of penicillin, the world's most important antibiotic. IpnA catalyzes the cyclization of the tripeptide N-[(5S)-5-amino-5-carboxypentanoyl]-L-cysteinyl-D-valine (LLD-ACV or ACV) to form isopenicillin N (IPN) that contains the beta-lactam nucleus. The penicillin biosynthesis occurs via 3 enzymatic steps, the first corresponding to the production of the tripeptide N-[(5S)-5-amino-5-carboxypentanoyl]-L-cysteinyl-D-valine (LLD-ACV or ACV) by the NRPS acvA. The tripeptide ACV is then cyclized to isopenicillin N (IPN) by the isopenicillin N synthase ipnA that forms the beta-lactam nucleus. Finally, the alpha-aminoadipyl side chain is exchanged for phenylacetic acid by the isopenicillin N acyltransferase penDE to yield penicillin in the peroxisomal matrix. In Emericella nidulans (strain FGSC A4 / ATCC 38163 / CBS 112.46 / NRRL 194 / M139) (Aspergillus nidulans), this protein is Isopenicillin N synthase.